Consider the following 226-residue polypeptide: ATP synthase subunit a 1 (226 aa).

Transmembrane regions (helical) follow at residues 20-40 (LTIV…WLIT), 78-98 (YLPF…CTVI), 113-133 (ALAL…SGLV), 174-194 (MILV…MNIL), and 196-216 (LLTG…YIAA).

Belongs to the ATPase A chain family. F-type ATPases have 2 components, CF(1) - the catalytic core - and CF(0) - the membrane proton channel. CF(1) has five subunits: alpha(3), beta(3), gamma(1), delta(1), epsilon(1). CF(0) has four main subunits: a, b, b' and c.

Its subcellular location is the cell inner membrane. In terms of biological role, key component of the proton channel; it plays a direct role in the translocation of protons across the membrane. The polypeptide is ATP synthase subunit a 1 (Chlorobaculum parvum (strain DSM 263 / NCIMB 8327) (Chlorobium vibrioforme subsp. thiosulfatophilum)).